The chain runs to 255 residues: Small ribosomal subunit protein uS2 (255 aa).

The tract at residues 226–255 is disordered; the sequence is QGVSNEEVAAEQNIDLDEKEKSEETEATEE.

It belongs to the universal ribosomal protein uS2 family.

This Staphylococcus aureus (strain Mu3 / ATCC 700698) protein is Small ribosomal subunit protein uS2.